A 325-amino-acid polypeptide reads, in one-letter code: Ribose-phosphate pyrophosphokinase 4 (325 aa).

Mg(2+) is bound by residues Asp145 and His147. A binding of phosphoribosylpyrophosphate region spans residues 228 to 243 (GRHVVIVDDLVQSGGT).

Belongs to the ribose-phosphate pyrophosphokinase family. Requires Mg(2+) as cofactor.

The enzyme catalyses D-ribose 5-phosphate + ATP = 5-phospho-alpha-D-ribose 1-diphosphate + AMP + H(+). The chain is Ribose-phosphate pyrophosphokinase 4 from Oryza sativa subsp. japonica (Rice).